The sequence spans 121 residues: Large ribosomal subunit protein bL19 (121 aa).

Belongs to the bacterial ribosomal protein bL19 family.

This protein is located at the 30S-50S ribosomal subunit interface and may play a role in the structure and function of the aminoacyl-tRNA binding site. The protein is Large ribosomal subunit protein bL19 of Gloeobacter violaceus (strain ATCC 29082 / PCC 7421).